A 232-amino-acid chain; its full sequence is 5'-methylthioadenosine/S-adenosylhomocysteine nucleosidase (232 aa).

The active-site Proton acceptor is the Glu-14. Substrate-binding positions include Gly-80, Val-154, and 175–176 (ME). Asp-199 serves as the catalytic Proton donor.

This sequence belongs to the PNP/UDP phosphorylase family. MtnN subfamily.

It carries out the reaction S-adenosyl-L-homocysteine + H2O = S-(5-deoxy-D-ribos-5-yl)-L-homocysteine + adenine. The catalysed reaction is S-methyl-5'-thioadenosine + H2O = 5-(methylsulfanyl)-D-ribose + adenine. The enzyme catalyses 5'-deoxyadenosine + H2O = 5-deoxy-D-ribose + adenine. Its pathway is amino-acid biosynthesis; L-methionine biosynthesis via salvage pathway; S-methyl-5-thio-alpha-D-ribose 1-phosphate from S-methyl-5'-thioadenosine (hydrolase route): step 1/2. In terms of biological role, catalyzes the irreversible cleavage of the glycosidic bond in both 5'-methylthioadenosine (MTA) and S-adenosylhomocysteine (SAH/AdoHcy) to adenine and the corresponding thioribose, 5'-methylthioribose and S-ribosylhomocysteine, respectively. Also cleaves 5'-deoxyadenosine, a toxic by-product of radical S-adenosylmethionine (SAM) enzymes, into 5-deoxyribose and adenine. The sequence is that of 5'-methylthioadenosine/S-adenosylhomocysteine nucleosidase from Haemophilus ducreyi (strain 35000HP / ATCC 700724).